A 193-amino-acid polypeptide reads, in one-letter code: Holliday junction branch migration complex subunit RuvA (193 aa).

Residues 1–64 (MIGRIAGILL…EDAHLLYGFL (64 aa)) are domain I. The domain II stretch occupies residues 65 to 139 (TPQERTTFRE…GKLGADLGAL (75 aa)). The tract at residues 139-143 (LAGAA) is flexible linker. Residues 144-193 (SQSDHAADILNALVALGYSEKEGLAAIKNVPAGTGVSEGIKLALKALSKV) form a domain III region.

Belongs to the RuvA family. Homotetramer. Forms an RuvA(8)-RuvB(12)-Holliday junction (HJ) complex. HJ DNA is sandwiched between 2 RuvA tetramers; dsDNA enters through RuvA and exits via RuvB. An RuvB hexamer assembles on each DNA strand where it exits the tetramer. Each RuvB hexamer is contacted by two RuvA subunits (via domain III) on 2 adjacent RuvB subunits; this complex drives branch migration. In the full resolvosome a probable DNA-RuvA(4)-RuvB(12)-RuvC(2) complex forms which resolves the HJ.

It is found in the cytoplasm. The RuvA-RuvB-RuvC complex processes Holliday junction (HJ) DNA during genetic recombination and DNA repair, while the RuvA-RuvB complex plays an important role in the rescue of blocked DNA replication forks via replication fork reversal (RFR). RuvA specifically binds to HJ cruciform DNA, conferring on it an open structure. The RuvB hexamer acts as an ATP-dependent pump, pulling dsDNA into and through the RuvAB complex. HJ branch migration allows RuvC to scan DNA until it finds its consensus sequence, where it cleaves and resolves the cruciform DNA. In Burkholderia ambifaria (strain ATCC BAA-244 / DSM 16087 / CCUG 44356 / LMG 19182 / AMMD) (Burkholderia cepacia (strain AMMD)), this protein is Holliday junction branch migration complex subunit RuvA.